The chain runs to 155 residues: Transcriptional repressor NrdR (155 aa).

The segment at 3 to 34 (CPFCGNIDTQVKDSRPAEDHVSIRRRRFCPAC) is a zinc-finger region. The region spanning 49–139 (LVVIKSSGKR…VYKNFQAADD (91 aa)) is the ATP-cone domain.

This sequence belongs to the NrdR family. Zn(2+) serves as cofactor.

Its function is as follows. Negatively regulates transcription of bacterial ribonucleotide reductase nrd genes and operons by binding to NrdR-boxes. The sequence is that of Transcriptional repressor NrdR from Cereibacter sphaeroides (strain ATCC 17025 / ATH 2.4.3) (Rhodobacter sphaeroides).